We begin with the raw amino-acid sequence, 295 residues long: RNA polymerase sigma-C factor (295 aa).

Positions aspartate 73 to valine 86 match the Polymerase core binding motif. Positions leucine 250 to isoleucine 269 form a DNA-binding region, H-T-H motif.

It belongs to the sigma-70 factor family.

Its function is as follows. Sigma factors are initiation factors that promote the attachment of RNA polymerase to specific initiation sites and are then released. This sigma factor is essential for normal fruiting body formation. The sequence is that of RNA polymerase sigma-C factor (sigC) from Myxococcus xanthus.